Here is a 311-residue protein sequence, read N- to C-terminus: Apolipoprotein E (311 aa).

Positions 1-18 are cleaved as a signal peptide; it reads MKALWAVLLVTLLTGCLA. Tandem repeats lie at residues 72 to 93, 94 to 115, 116 to 137, 138 to 159, 160 to 181, 182 to 203, 204 to 225, and 226 to 247. The interval 72 to 247 is 8 X 22 AA approximate tandem repeats; it reads ALMEDTMTEV…RLEEVREHME (176 aa). A Methionine sulfoxide modification is found at methionine 135. At serine 139 the chain carries Phosphoserine. The tract at residues 150–160 is LDL and other lipoprotein receptors binding; sequence HLRKMRKRLMR. 154–157 is a heparin binding site; it reads MRKR. The lipid-binding and lipoprotein association stretch occupies residues 202–282; that stretch reads TANLGAGAAQ…GWFEPIVEDM (81 aa). 221–228 is a binding site for heparin; the sequence is GDRIRGRL. Residues 258 to 311 form a homooligomerization region; the sequence is QQIRLQAEIFQARLKGWFEPIVEDMHRQWANLMEKIQASVATNPIITPVAQENQ. Residues 270 to 282 are specificity for association with VLDL; sequence RLKGWFEPIVEDM.

Belongs to the apolipoprotein A1/A4/E family. In terms of assembly, homotetramer. May interact with ABCA1; functionally associated with ABCA1 in the biogenesis of HDLs. May interact with APP/A4 amyloid-beta peptide; the interaction is extremely stable in vitro but its physiological significance is unclear. May interact with MAPT. May interact with MAP2. In the cerebrospinal fluid, interacts with secreted SORL1. Interacts with PMEL; this allows the loading of PMEL luminal fragment on ILVs to induce fibril nucleation. APOE exists as multiple glycosylated and sialylated glycoforms within cells and in plasma. The extent of glycosylation and sialylation are tissue and context specific. In terms of processing, glycated in plasma VLDL. Post-translationally, phosphorylated by FAM20C in the extracellular medium.

The protein localises to the secreted. It localises to the extracellular space. It is found in the extracellular matrix. Its subcellular location is the extracellular vesicle. The protein resides in the endosome. The protein localises to the multivesicular body. APOE is an apolipoprotein, a protein associating with lipid particles, that mainly functions in lipoprotein-mediated lipid transport between organs via the plasma and interstitial fluids. APOE is a core component of plasma lipoproteins and is involved in their production, conversion and clearance. Apolipoproteins are amphipathic molecules that interact both with lipids of the lipoprotein particle core and the aqueous environment of the plasma. As such, APOE associates with chylomicrons, chylomicron remnants, very low density lipoproteins (VLDL) and intermediate density lipoproteins (IDL) but shows a preferential binding to high-density lipoproteins (HDL). It also binds a wide range of cellular receptors including the LDL receptor/LDLR and the very low-density lipoprotein receptor/VLDLR that mediate the cellular uptake of the APOE-containing lipoprotein particles. Finally, APOE also has a heparin-binding activity and binds heparan-sulfate proteoglycans on the surface of cells, a property that supports the capture and the receptor-mediated uptake of APOE-containing lipoproteins by cells. This Mus musculus (Mouse) protein is Apolipoprotein E (Apoe).